We begin with the raw amino-acid sequence, 36 residues long: Pancreatic polypeptide (36 aa).

Tyrosine 36 carries the tyrosine amide modification.

This sequence belongs to the NPY family.

Its subcellular location is the secreted. Hormone secreted by pancreatic cells that acts as a regulator of pancreatic and gastrointestinal functions probably by signaling through the G protein-coupled receptor NPY4R2. This chain is Pancreatic polypeptide (PPY), found in Equus przewalskii (Przewalski's horse).